Reading from the N-terminus, the 224-residue chain is Cytidylate kinase (224 aa).

12–20 (GPSGAGKGT) contacts ATP.

It belongs to the cytidylate kinase family. Type 1 subfamily.

Its subcellular location is the cytoplasm. It catalyses the reaction CMP + ATP = CDP + ADP. The enzyme catalyses dCMP + ATP = dCDP + ADP. The protein is Cytidylate kinase of Aliivibrio salmonicida (strain LFI1238) (Vibrio salmonicida (strain LFI1238)).